A 512-amino-acid chain; its full sequence is MAQATATTEKLNKFEKLKLEKDGLAVRDQIQHFASIGWEAMDPGDREHRLKWLGIFWRPVTPGRFMARLRIPSGILQSQQLNALANFLQRYGDQASIDITTRQNLQLRGLLLEDTPEFLERLHAVGLTSVQSGMDNVRNITGSPVAGLDAAELFDTRSLIQALQDDLTAAGQGNSEFTNLPRKFNIAIEGGRDNSIHAEINDLAFTPAYQDGTLGFNVWVGGFFSSTRVAPAIPLNAWVPADHSVIRLSRAILEVFRDNGSRGNRQKTRLMWLIDEWGIERFRQVVSEAYGAPLAAAAPELMDWEKRDFLGVHPQKQAGLNFVGLHVPVGRLTTEDLYELARLADTYGQGEVRLTVEQNVILTHIPDAQLPTLLAEPLLTRFSPQPAPLSRGTVSCTGSQYCNFALIETKQRAIAIAQSLEAELDLPRPVRIHWTGCPNSCGQPQVADIGLMGAKVRKDGQMVEGVDIFLGGKVGYDAHLGEKAMTGVACEDLPDVLRQLLIERFGAQARSH.

[4Fe-4S] cluster is bound by residues Cys-396, Cys-402, Cys-437, and Cys-441. Cys-441 serves as a coordination point for siroheme.

It belongs to the nitrite and sulfite reductase 4Fe-4S domain family.

The catalysed reaction is 6 oxidized [2Fe-2S]-[ferredoxin] + NH4(+) + 2 H2O = nitrite + 6 reduced [2Fe-2S]-[ferredoxin] + 8 H(+). The sequence is that of Ferredoxin--nitrite reductase (nirA) from Synechococcus elongatus (strain ATCC 33912 / PCC 7942 / FACHB-805) (Anacystis nidulans R2).